Reading from the N-terminus, the 399-residue chain is Tryptophan synthase beta chain (399 aa).

An N6-(pyridoxal phosphate)lysine modification is found at K92.

It belongs to the TrpB family. Tetramer of two alpha and two beta chains. The cofactor is pyridoxal 5'-phosphate.

The enzyme catalyses (1S,2R)-1-C-(indol-3-yl)glycerol 3-phosphate + L-serine = D-glyceraldehyde 3-phosphate + L-tryptophan + H2O. The protein operates within amino-acid biosynthesis; L-tryptophan biosynthesis; L-tryptophan from chorismate: step 5/5. Its function is as follows. The beta subunit is responsible for the synthesis of L-tryptophan from indole and L-serine. The protein is Tryptophan synthase beta chain of Oceanobacillus iheyensis (strain DSM 14371 / CIP 107618 / JCM 11309 / KCTC 3954 / HTE831).